A 129-amino-acid chain; its full sequence is Small ribosomal subunit protein uS11 (129 aa).

This sequence belongs to the universal ribosomal protein uS11 family. Part of the 30S ribosomal subunit. Interacts with proteins S7 and S18. Binds to IF-3.

Its function is as follows. Located on the platform of the 30S subunit, it bridges several disparate RNA helices of the 16S rRNA. Forms part of the Shine-Dalgarno cleft in the 70S ribosome. The chain is Small ribosomal subunit protein uS11 from Staphylococcus epidermidis (strain ATCC 12228 / FDA PCI 1200).